The following is a 902-amino-acid chain: Translation initiation factor IF-2 (902 aa).

2 stretches are compositionally biased toward basic and acidic residues: residues 1–12 (MVDTKTPGDKKL) and 43–60 (VVEKRGKRRIGDGPEPHA). The interval 1–276 (MVDTKTPGDK…KPGPQKERGR (276 aa)) is disordered. The segment covering 69 to 84 (PAAPAPSRPAPPPAPP) has biased composition (pro residues). Positions 111–174 (AKLREVEERR…ETEAKKRFGE (64 aa)) are enriched in basic and acidic residues. Composition is skewed to low complexity over residues 181–190 (AARPATAAPA) and 198–237 (APAARPGTTTTRPGTTTARPATTTAQRPGAPAGRGPAVAA). Residues 398–567 (TRSPVVTVMG…MIALQADILD (170 aa)) form the tr-type G domain. Residues 407–414 (GHVDHGKT) are G1. 407–414 (GHVDHGKT) contributes to the GTP binding site. A G2 region spans residues 432–436 (GITQH). A G3 region spans residues 455–458 (DTPG). GTP-binding positions include 455 to 459 (DTPGH) and 509 to 512 (NKID). A G4 region spans residues 509-512 (NKID). Residues 545 to 547 (SAK) form a G5 region.

The protein belongs to the TRAFAC class translation factor GTPase superfamily. Classic translation factor GTPase family. IF-2 subfamily.

The protein resides in the cytoplasm. One of the essential components for the initiation of protein synthesis. Protects formylmethionyl-tRNA from spontaneous hydrolysis and promotes its binding to the 30S ribosomal subunits. Also involved in the hydrolysis of GTP during the formation of the 70S ribosomal complex. In Bradyrhizobium diazoefficiens (strain JCM 10833 / BCRC 13528 / IAM 13628 / NBRC 14792 / USDA 110), this protein is Translation initiation factor IF-2.